The chain runs to 133 residues: Profilin Sal k 4.0201 (133 aa).

The cysteines at positions 95 and 117 are disulfide-linked.

This sequence belongs to the profilin family. As to quaternary structure, occurs in many kinds of cells as a complex with monomeric actin in a 1:1 ratio. As to expression, expressed in pollen (at protein and mRNA level).

It is found in the cytoplasm. Its subcellular location is the cytoskeleton. Binds to actin and affects the structure of the cytoskeleton. At high concentrations, profilin prevents the polymerization of actin, whereas it enhances it at low concentrations. In Kali turgidum (Prickly saltwort), this protein is Profilin Sal k 4.0201.